The chain runs to 640 residues: Replication protein A 70 kDa DNA-binding subunit A (640 aa).

Positions 211 to 293 (AIKARVTAKG…NHLKNEWEIF (83 aa)) form a DNA-binding region, OB. The C4-type zinc-finger motif lies at 503–529 (CPLMIGDKQCNKKVTRSGTNRWLCDRC).

Belongs to the replication factor A protein 1 family. Heterotrimer of RPA1, RPA2 and RPA3 (canonical replication protein A complex). Interacts with RPA2A. As to expression, expressed in roots, leaves, stalks and flower buds.

Its subcellular location is the nucleus. Component of the replication protein A complex (RPA) required for DNA recombination, repair and replication. The activity of RPA is mediated by single-stranded DNA binding and protein interactions. Plays an essential role at later stages of meiotic recombination events required for the formation of class I crossovers. Is essential for normal progression through meiosis in pollen mother cells. Is involved in repair of double-strand DNA breaks (DSBs) induced by genotoxic stresses, but does not seem to be required for the repair of meiotic DSBs. The polypeptide is Replication protein A 70 kDa DNA-binding subunit A (RPA1A) (Arabidopsis thaliana (Mouse-ear cress)).